The chain runs to 143 residues: Holo-[acyl-carrier-protein] synthase (143 aa).

D9 and E63 together coordinate Mg(2+).

Belongs to the P-Pant transferase superfamily. AcpS family. Mg(2+) is required as a cofactor.

It is found in the cytoplasm. The catalysed reaction is apo-[ACP] + CoA = holo-[ACP] + adenosine 3',5'-bisphosphate + H(+). Its function is as follows. Transfers the 4'-phosphopantetheine moiety from coenzyme A to a Ser of acyl-carrier-protein. The polypeptide is Holo-[acyl-carrier-protein] synthase (Burkholderia pseudomallei (strain 1106a)).